The chain runs to 346 residues: Farnesyl diphosphate synthase 1 (346 aa).

3 residues coordinate isopentenyl diphosphate: lysine 52, arginine 55, and glutamine 90. Residues aspartate 97 and aspartate 101 each coordinate Mg(2+). Residues 97-101 carry the DDXXD motif motif; the sequence is DDIMD. A dimethylallyl diphosphate-binding site is contributed by arginine 106. Residue arginine 107 coordinates isopentenyl diphosphate. The dimethylallyl diphosphate site is built by lysine 194, threonine 195, and glutamine 233. Residues 236–240 carry the DDXXD motif motif; the sequence is DDYLD. Dimethylallyl diphosphate is bound by residues lysine 250 and lysine 259.

Belongs to the FPP/GGPP synthase family. Mg(2+) serves as cofactor. Mn(2+) is required as a cofactor. In terms of tissue distribution, highly expressed in shoots.

It catalyses the reaction isopentenyl diphosphate + (2E)-geranyl diphosphate = (2E,6E)-farnesyl diphosphate + diphosphate. The catalysed reaction is isopentenyl diphosphate + dimethylallyl diphosphate = (2E)-geranyl diphosphate + diphosphate. Its pathway is isoprenoid biosynthesis; farnesyl diphosphate biosynthesis; farnesyl diphosphate from geranyl diphosphate and isopentenyl diphosphate: step 1/1. It participates in isoprenoid biosynthesis; geranyl diphosphate biosynthesis; geranyl diphosphate from dimethylallyl diphosphate and isopentenyl diphosphate: step 1/1. Its function is as follows. Catalyzes the sequential condensation of isopentenyl pyrophosphate (IPP) with the allylic pyrophosphates, dimethylallyl pyrophosphate (DMAPP), and then with the resultant geranylpyrophosphate (GPP) to the ultimate product farnesyl pyrophosphate (FPP). Has a 4.5 time greater affinity for GPP versus DMAPP. This is Farnesyl diphosphate synthase 1 (FDS-1) from Artemisia spiciformis (Spiked big sagebrush).